The chain runs to 368 residues: Histidinol-phosphate aminotransferase 1 (368 aa).

N6-(pyridoxal phosphate)lysine is present on Lys-224.

Belongs to the class-II pyridoxal-phosphate-dependent aminotransferase family. Histidinol-phosphate aminotransferase subfamily. Homodimer. Pyridoxal 5'-phosphate serves as cofactor.

The catalysed reaction is L-histidinol phosphate + 2-oxoglutarate = 3-(imidazol-4-yl)-2-oxopropyl phosphate + L-glutamate. It functions in the pathway amino-acid biosynthesis; L-histidine biosynthesis; L-histidine from 5-phospho-alpha-D-ribose 1-diphosphate: step 7/9. The polypeptide is Histidinol-phosphate aminotransferase 1 (hisC1) (Rhizobium meliloti (strain 1021) (Ensifer meliloti)).